We begin with the raw amino-acid sequence, 343 residues long: Ribosomal RNA small subunit methyltransferase H (343 aa).

Residues 39–41 (AGH), D58, F87, D108, and Q115 contribute to the S-adenosyl-L-methionine site.

This sequence belongs to the methyltransferase superfamily. RsmH family.

It localises to the cytoplasm. The catalysed reaction is cytidine(1402) in 16S rRNA + S-adenosyl-L-methionine = N(4)-methylcytidine(1402) in 16S rRNA + S-adenosyl-L-homocysteine + H(+). In terms of biological role, specifically methylates the N4 position of cytidine in position 1402 (C1402) of 16S rRNA. The chain is Ribosomal RNA small subunit methyltransferase H from Bifidobacterium adolescentis (strain ATCC 15703 / DSM 20083 / NCTC 11814 / E194a).